Here is a 477-residue protein sequence, read N- to C-terminus: Bifunctional protein HldE (477 aa).

A ribokinase region spans residues 1–318 (MKVTLPEFER…ENAVRGRADT (318 aa)). Lys-179 carries the post-translational modification N6-acetyllysine. An ATP-binding site is contributed by 195-198 (NLSE). Asp-264 is an active-site residue. Positions 344 to 477 (MTNGVFDILH…IKKIQQDKKG (134 aa)) are cytidylyltransferase.

It in the N-terminal section; belongs to the carbohydrate kinase PfkB family. This sequence in the C-terminal section; belongs to the cytidylyltransferase family. Homodimer.

It catalyses the reaction D-glycero-beta-D-manno-heptose 7-phosphate + ATP = D-glycero-beta-D-manno-heptose 1,7-bisphosphate + ADP + H(+). It carries out the reaction D-glycero-beta-D-manno-heptose 1-phosphate + ATP + H(+) = ADP-D-glycero-beta-D-manno-heptose + diphosphate. The protein operates within nucleotide-sugar biosynthesis; ADP-L-glycero-beta-D-manno-heptose biosynthesis; ADP-L-glycero-beta-D-manno-heptose from D-glycero-beta-D-manno-heptose 7-phosphate: step 1/4. It participates in nucleotide-sugar biosynthesis; ADP-L-glycero-beta-D-manno-heptose biosynthesis; ADP-L-glycero-beta-D-manno-heptose from D-glycero-beta-D-manno-heptose 7-phosphate: step 3/4. It functions in the pathway bacterial outer membrane biogenesis; LPS core biosynthesis. Catalyzes the phosphorylation of D-glycero-D-manno-heptose 7-phosphate at the C-1 position to selectively form D-glycero-beta-D-manno-heptose-1,7-bisphosphate. In terms of biological role, catalyzes the ADP transfer from ATP to D-glycero-beta-D-manno-heptose 1-phosphate, yielding ADP-D-glycero-beta-D-manno-heptose. The chain is Bifunctional protein HldE from Shigella flexneri.